Here is a 412-residue protein sequence, read N- to C-terminus: Phosphoglycerate kinase (412 aa).

Residues 26 to 28 (DFN), Arg-42, 65 to 68 (HLGR), Arg-133, and Arg-166 contribute to the substrate site. Residues Lys-217, Gly-308, Glu-339, and 368–371 (GGDS) contribute to the ATP site.

This sequence belongs to the phosphoglycerate kinase family. As to quaternary structure, monomer.

The protein resides in the cytoplasm. It carries out the reaction (2R)-3-phosphoglycerate + ATP = (2R)-3-phospho-glyceroyl phosphate + ADP. It functions in the pathway carbohydrate degradation; glycolysis; pyruvate from D-glyceraldehyde 3-phosphate: step 2/5. The polypeptide is Phosphoglycerate kinase (Synechococcus sp. (strain JA-3-3Ab) (Cyanobacteria bacterium Yellowstone A-Prime)).